We begin with the raw amino-acid sequence, 419 residues long: POU domain, class 4, transcription factor 1 (419 aa).

Positions 57 to 66 match the POU-IV box motif; it reads RAEALAAVDI. Disordered stretches follow at residues 94 to 117 and 131 to 197; these read STVPLAHHHHHHHHHQALEPGDLL and AGGA…HSLG. The segment covering 99–108 has biased composition (basic residues); it reads AHHHHHHHHH. Over residues 131 to 184 the composition is skewed to gly residues; that stretch reads AGGAGAAAGGGGAHDGPGGGGGPGGGGGPGGGPGGGGGGGPGGGGGGPGGGLLG. Residues 261 to 338 enclose the POU-specific domain; sequence SDTDPRELEA…LQAWLEEAEG (78 aa). The segment at residues 356–415 is a DNA-binding region (homeobox); it reads KRKRTSIAAPEKRSLEAYFAVQPRPSSEKIAAIAEKLDLKKNVVRVWFCNQRQKQKRMKF.

It belongs to the POU transcription factor family. Class-4 subfamily. Interacts (via N-terminus) with RIT2; the interaction controls POU4F1 transactivation activity on some neuronal target genes. Isoform 1 interacts with POU4F2; this interaction inhibits both POU4F1 DNA-binding and transcriptional activities. Isoform 1 interacts (C-terminus) with ESR1 (via DNA-binding domain); this interaction decreases the estrogen receptor ESR1 transcriptional activity in a DNA- and ligand 17-beta-estradiol-independent manner. Expressed in the brain and the retina. Present in the developing brain, spinal cord and eye.

The protein resides in the nucleus. The protein localises to the cytoplasm. In terms of biological role, multifunctional transcription factor with different regions mediating its different effects. Acts by binding (via its C-terminal domain) to sequences related to the consensus octamer motif 5'-ATGCAAAT-3' in the regulatory regions of its target genes. Regulates the expression of specific genes involved in differentiation and survival within a subset of neuronal lineages. It has been shown that activation of some of these genes requires its N-terminal domain, maybe through a neuronal-specific cofactor. Activates BCL2 expression and protects neuronal cells from apoptosis (via the N-terminal domain). Induces neuronal process outgrowth and the coordinate expression of genes encoding synaptic proteins. Exerts its major developmental effects in somatosensory neurons and in brainstem nuclei involved in motor control. Stimulates the binding affinity of the nuclear estrogene receptor ESR1 to DNA estrogen response element (ERE), and hence modulates ESR1-induced transcriptional activity. May positively regulate POU4F2 and POU4F3. Regulates dorsal root ganglion sensory neuron specification and axonal projection into the spinal cord. Plays a role in TNFSF11-mediated terminal osteoclast differentiation. Negatively regulates its own expression interacting directly with a highly conserved autoregulatory domain surrounding the transcription initiation site. Its function is as follows. Able to act as transcription factor, cannot regulate the expression of the same subset of genes than isoform 1. Does not have antiapoptotic effect on neuronal cells. This chain is POU domain, class 4, transcription factor 1, found in Homo sapiens (Human).